The following is a 178-amino-acid chain: MALQIAQNNRDGQQLVGADQGKVEVYVLFANTTYRTLDLYWVCERERENMYLTLKPFEEVRVNTFTTHSWLFRDYYTGERMHVRSQRIFQPIRVRVPKSQQSPDQLVDVRSEVLIHFPMRSLRENCLWLVARWLIRTSNAPRRIIHGYHIPSTLKQQLLSLLTCIESYSRVAGTRRRR.

This sequence belongs to the VHL family. In terms of assembly, part of a complex with Cul2, Roc1a/Rbx1 and the elongin BC complex. Interacts with sima/Hif1a. Interacts with itself. Interacts with mgr and betaTub56D/tubulin beta-1 chain. Interacts with tubulin alpha-beta heterodimers by itself or in complex with mgr. Interacts with microtubules (MTs).

The protein operates within protein modification; protein ubiquitination. Functionally, involved in development of tracheal vasculature. Probably involved in halting cell migration at the end of vascular tube outgrowth. Possesses E3 ubiquitin ligase activity when in complex with Elongin BC complex, Cul2 and Rox1a/Rbx1, and can target sima/Hif1a for ubiquitination. May play a critical role in promoting microtubule stabilization when tubulins are correctly folded by the prefoldin complex. If tubulin is incorrectly folded, may promote its degradation. In Drosophila melanogaster (Fruit fly), this protein is Protein Vhl.